A 1184-amino-acid chain; its full sequence is Nucleolar protein 6 (1184 aa).

The span at 1-10 (MGRIKEKESK) shows a compositional bias: basic and acidic residues. Disordered regions lie at residues 1-42 (MGRI…NRVP) and 1133-1184 (REQR…NALC).

The protein belongs to the NRAP family. As to quaternary structure, part of the small subunit (SSU) processome, composed of more than 70 proteins and the RNA chaperone small nucleolar RNA (snoRNA) U3.

The protein resides in the nucleus. Its subcellular location is the nucleolus. The protein localises to the chromosome. Its function is as follows. Part of the small subunit (SSU) processome, first precursor of the small eukaryotic ribosomal subunit. During the assembly of the SSU processome in the nucleolus, many ribosome biogenesis factors, an RNA chaperone and ribosomal proteins associate with the nascent pre-rRNA and work in concert to generate RNA folding, modifications, rearrangements and cleavage as well as targeted degradation of pre-ribosomal RNA by the RNA exosome. In Drosophila virilis (Fruit fly), this protein is Nucleolar protein 6.